The chain runs to 314 residues: Methionyl-tRNA formyltransferase (314 aa).

Residue 112–115 (SLLP) coordinates (6S)-5,6,7,8-tetrahydrofolate.

The protein belongs to the Fmt family.

It catalyses the reaction L-methionyl-tRNA(fMet) + (6R)-10-formyltetrahydrofolate = N-formyl-L-methionyl-tRNA(fMet) + (6S)-5,6,7,8-tetrahydrofolate + H(+). Functionally, attaches a formyl group to the free amino group of methionyl-tRNA(fMet). The formyl group appears to play a dual role in the initiator identity of N-formylmethionyl-tRNA by promoting its recognition by IF2 and preventing the misappropriation of this tRNA by the elongation apparatus. The chain is Methionyl-tRNA formyltransferase from Buchnera aphidicola subsp. Schizaphis graminum (strain Sg).